The following is a 297-amino-acid chain: Glycosylphosphatidylinositol anchor biosynthesis protein 11 (297 aa).

Positions 1 to 18 (MTSASPSPLRAANAASSA) are enriched in low complexity. Positions 1–26 (MTSASPSPLRAANAASSAPVPPPAMK) are disordered. 2 helical membrane passes run 44 to 64 (SFVH…ALVA) and 76 to 96 (FLAL…GSVL). The tract at residues 97–140 (PSPPASPVSDGDEKEKEKEKEKEKEKEKRKLPLRAGKLPRKKNQ) is disordered. Basic and acidic residues predominate over residues 107–126 (GDEKEKEKEKEKEKEKEKRK). A compositionally biased stretch (basic residues) spans 127–140 (LPLRAGKLPRKKNQ). The N-linked (GlcNAc...) asparagine glycan is linked to Asn-139. The next 4 membrane-spanning stretches (helical) occupy residues 157 to 177 (LILT…LFGA), 187 to 207 (VLCA…VHGV), 225 to 245 (VWGG…PIPL), and 253 to 273 (AFPI…SVVC).

Belongs to the PIGF family.

It is found in the endoplasmic reticulum membrane. The protein operates within glycolipid biosynthesis; glycosylphosphatidylinositol-anchor biosynthesis. In terms of biological role, acts in the GPI biosynthetic pathway between GlcNAc-PI synthesis and GPI transfer to protein. In Aspergillus fumigatus (strain ATCC MYA-4609 / CBS 101355 / FGSC A1100 / Af293) (Neosartorya fumigata), this protein is Glycosylphosphatidylinositol anchor biosynthesis protein 11 (gpi11).